The sequence spans 310 residues: Syntaxin-81 (310 aa).

Residues 1 to 289 (MSRFRDRTED…QAIQRNSSSR (289 aa)) are Cytoplasmic-facing. The stretch at 77-114 (RTTEQEKDSIEQEVAAFIKACKEQIDILINSIRNEEAN) forms a coiled coil. Residues 290 to 310 (TFLLLFFFVLTFSVLFLDWYS) traverse the membrane as a helical; Anchor for type IV membrane protein segment.

Belongs to the syntaxin family. Part of the t-SNARE complex. Interacts with MAG2.

It is found in the membrane. In terms of biological role, vesicle trafficking protein that functions in the secretory pathway. The chain is Syntaxin-81 (SYP81) from Arabidopsis thaliana (Mouse-ear cress).